The following is a 139-amino-acid chain: Acidic phospholipase A2 Tgc-E6 (139 aa).

The first 16 residues, 1 to 16 (MRTLWIMAVLLLGVEG), serve as a signal peptide directing secretion. 7 cysteine pairs are disulfide-bonded: Cys-42–Cys-132, Cys-44–Cys-60, Cys-59–Cys-111, Cys-65–Cys-139, Cys-66–Cys-104, Cys-73–Cys-97, and Cys-91–Cys-102. The Ca(2+) site is built by Tyr-43, Gly-45, and Gly-47. The active site involves His-63. Asp-64 lines the Ca(2+) pocket. Residue Asp-105 is part of the active site.

Belongs to the phospholipase A2 family. Group II subfamily. D49 sub-subfamily. Monomer. Ca(2+) is required as a cofactor. As to expression, expressed by the venom gland.

Its subcellular location is the secreted. It carries out the reaction a 1,2-diacyl-sn-glycero-3-phosphocholine + H2O = a 1-acyl-sn-glycero-3-phosphocholine + a fatty acid + H(+). Functionally, snake venom phospholipase A2 (PLA2) that inhibits the ADP-(IC(50)=272 nM) and collagen-induced (IC(50)=518 nM) human platelet aggregation in platelet rich plasma. Exhibits very high hydrolytic activities toward the synthetic lecithin, and prefers the anionic micelles (dPPC with deoxycholate) to the zwitterionic micelles (dPPC with Triton X-100). PLA2 catalyzes the calcium-dependent hydrolysis of the 2-acyl groups in 3-sn-phosphoglycerides. The protein is Acidic phospholipase A2 Tgc-E6 of Trimeresurus gracilis (Kikuchi habu).